Here is a 130-residue protein sequence, read N- to C-terminus: Small ribosomal subunit protein uS9 (130 aa).

It belongs to the universal ribosomal protein uS9 family.

The polypeptide is Small ribosomal subunit protein uS9 (Chromobacterium violaceum (strain ATCC 12472 / DSM 30191 / JCM 1249 / CCUG 213 / NBRC 12614 / NCIMB 9131 / NCTC 9757 / MK)).